The chain runs to 49 residues: SPbeta prophage-derived uncharacterized protein YoqT (49 aa).

The helical transmembrane segment at 7 to 29 (CFVNWSFDKIMDYILIAGLYFVF) threads the bilayer.

The protein resides in the cell membrane. This is SPbeta prophage-derived uncharacterized protein YoqT (yoqT) from Bacillus subtilis (strain 168).